Reading from the N-terminus, the 329-residue chain is uncharacterized protein (329 aa).

In terms of domain architecture, SIS spans I38–F184. G56–A61 serves as a coordination point for ATP. 2 CBS domains span residues Q211 to L267 and E270 to A329.

It belongs to the SIS family. GutQ/KpsF subfamily.

This is an uncharacterized protein from Helicobacter pylori (strain ATCC 700392 / 26695) (Campylobacter pylori).